Here is a 358-residue protein sequence, read N- to C-terminus: Gentisate 1,2-dioxygenase (358 aa).

The 120-residue stretch at 239 to 358 folds into the Cupin type-1 domain; sequence QTLRQRAEND…AFNFYAEAEP (120 aa).

Belongs to the gentisate 1,2-dioxygenase family. As to quaternary structure, homotetramer.

It catalyses the reaction 2,5-dihydroxybenzoate + O2 = 3-maleylpyruvate + H(+). It participates in aromatic compound metabolism; naphthalene degradation. Its activity is regulated as follows. Inhibited by 2,2'-dipyridyl. In terms of biological role, catalyzes the oxygen-dependent ring fission of gentisate between the carboxyl and proximal hydroxyl groups at positions 1 and 2 of the aromatic ring to form maleylpyruvate. No activity with cathechol and protecatechuate as substrates. Part of a 3-hydroxybenzoic acid-degradation pathway. In Haloferax sp, this protein is Gentisate 1,2-dioxygenase (gdoA).